The primary structure comprises 72 residues: Large ribosomal subunit protein bL31 (72 aa).

Residues Cys16, Cys18, Cys38, and Cys41 each coordinate Zn(2+).

Belongs to the bacterial ribosomal protein bL31 family. Type A subfamily. Part of the 50S ribosomal subunit. The cofactor is Zn(2+).

Functionally, binds the 23S rRNA. This Beutenbergia cavernae (strain ATCC BAA-8 / DSM 12333 / CCUG 43141 / JCM 11478 / NBRC 16432 / NCIMB 13614 / HKI 0122) protein is Large ribosomal subunit protein bL31.